We begin with the raw amino-acid sequence, 1212 residues long: DNA-directed RNA polymerase subunit beta' (1212 aa).

Residues cysteine 60, cysteine 62, cysteine 75, and cysteine 78 each contribute to the Zn(2+) site. Residues aspartate 450, aspartate 452, and aspartate 454 each contribute to the Mg(2+) site. Zn(2+) contacts are provided by cysteine 819, cysteine 893, cysteine 900, and cysteine 903.

This sequence belongs to the RNA polymerase beta' chain family. The RNAP catalytic core consists of 2 alpha, 1 beta, 1 beta' and 1 omega subunit. When a sigma factor is associated with the core the holoenzyme is formed, which can initiate transcription. Mg(2+) serves as cofactor. It depends on Zn(2+) as a cofactor.

The enzyme catalyses RNA(n) + a ribonucleoside 5'-triphosphate = RNA(n+1) + diphosphate. DNA-dependent RNA polymerase catalyzes the transcription of DNA into RNA using the four ribonucleoside triphosphates as substrates. The sequence is that of DNA-directed RNA polymerase subunit beta' from Streptococcus thermophilus (strain CNRZ 1066).